Here is a 435-residue protein sequence, read N- to C-terminus: MSFDSLSPQELAALHARHQQDYAALQGMKLALDLTRGKPSAEQLDLSNQLLSLPGDDYRDPEGTDTRNYGGQHGLPGLRAIFAELLGIAVPNLIAGNNSSLELMHDIVAFSMLYGGVDSPRPWIQEQDGIKFLCPVPGYDRHFAITETMGIEMIPIPMLQDGPDVDLIEELVAVDPAIKGMWTVPVFGNPSGVTYSWETVRRLVQMRTAAPDFRLFWDNAYAVHTLTLDFPRQVDVLGLAAKAGNPNRPYVFASTSKITFAGGGVSFFGGSLGNIAWYLQYAGKKSIGPDKVNQLRHLRFFGDADGVRLHMLRHQQILAPKFALVAEVLDQRLSESKIASWTEPKGGYFISLDVLPGTARRTVALAKDVGIAVTEAGASFPYRKDPDDKNIRIAPSFPSVPDLRNAVDGLATCALLAATETLLNQGLASSAPNVR.

Residues Y69 and 100 to 101 (SL) each bind pyridoxal 5'-phosphate. Position 139-141 (139-141 (YDR)) interacts with substrate. Pyridoxal 5'-phosphate-binding positions include N189, Y221, and 254–256 (STS). R392 is a binding site for substrate.

This sequence belongs to the class-I pyridoxal-phosphate-dependent aminotransferase family. The cofactor is pyridoxal 5'-phosphate.

It carries out the reaction L-aspartate + 2-oxoglutarate = oxaloacetate + L-glutamate. Its function is as follows. Main aspartate aminotransferase that couples nitrogen assimilation to aspartate synthesis. Has a weak, but significant, side activity toward kynurenine (Kyn). Oxaloacetate and 2-oxoglutarate, but not pyruvate, serve as amino acceptors, while Asp, Glu and Kyn serve as the best amino donors. Essential for axenic growth and survival of M.tuberculosis in macrophages and in mice. This Mycobacterium tuberculosis (strain ATCC 25618 / H37Rv) protein is Aspartate aminotransferase.